A 579-amino-acid polypeptide reads, in one-letter code: MSIYELFHYSLFLGLFVAFTYNKKQPPVFGAALAFWCILLSFLGLSFRHIPNNLSNYNVLTANAPFFYQISGTWSNHEGSISLWCRILSFYGFLLCYRGRPQSHNVSKRGGHRETLFYSFVSNFVKNPILSLPRYEQKSRAAPQLYTPFVLRTFVDSELRSRRNRTFDGPALFYVYAPLYPERKMSFAPLGARLPVVRGEGKRMSLLLHLARDDKERASSIDEQRIDGALGIALFFSPFLSASSDPFVRNFFVRTEPLAESNPVPQDPISAIHPPCIYAGDVASAMGFGLCRSKMMNGIVALHSPPMRKDAAEKNGTLFRSAGCVGSRITSELFTLKFKHVGEKCYPALLLRSNRSPLMLLRRRFFALSSLWTGALVDTGREQAKRVVRNGKKDTTTSPLCWTAGANTVVSDQDQEPIRIWILTCRWFLNVGILLGSWWAHHELGRGGWWFRDPVENASFMPRVLATARIHSVILPLLHSWTSFLNIVTLPCCVSGTSSIRSGLLAPVHSFATDDTRGIFLWRFFLLMTGISMILFSQMKQQASVRRTYKKEMVMARSTLVHLRHSARAQPRPVMLWKN.

The protein belongs to the CcmF/CycK/Ccl1/NrfE/CcsA family.

Its subcellular location is the mitochondrion. In terms of biological role, could be involved in assembly and maturation of cytochromes c. May play a role in guidance of apocytochromes and heme groups for the covalent linkage introduced by the cytochrome-c-heme lyase. The sequence is that of Probable cytochrome c biosynthesis protein from Daucus carota (Wild carrot).